The chain runs to 251 residues: Small ribosomal subunit protein uS2 (251 aa).

It belongs to the universal ribosomal protein uS2 family.

This Novosphingobium aromaticivorans (strain ATCC 700278 / DSM 12444 / CCUG 56034 / CIP 105152 / NBRC 16084 / F199) protein is Small ribosomal subunit protein uS2.